The following is a 383-amino-acid chain: Chaperone protein DnaJ (383 aa).

The J domain occupies 5 to 70 (DYYKTLGVTQ…KKRTAYDQYG (66 aa)). The CR-type zinc finger occupies 137–215 (GTIKEIKIPT…CHGNGRIEIS (79 aa)). Positions 150, 153, 167, 170, 189, 192, 203, and 206 each coordinate Zn(2+). CXXCXGXG motif repeat units lie at residues 150-157 (CPTCYGYG), 167-174 (CPTCRGNG), 189-196 (CPQCHGEG), and 203-210 (CRRCHGNG).

This sequence belongs to the DnaJ family. Homodimer. It depends on Zn(2+) as a cofactor.

Its subcellular location is the cytoplasm. In terms of biological role, participates actively in the response to hyperosmotic and heat shock by preventing the aggregation of stress-denatured proteins and by disaggregating proteins, also in an autonomous, DnaK-independent fashion. Unfolded proteins bind initially to DnaJ; upon interaction with the DnaJ-bound protein, DnaK hydrolyzes its bound ATP, resulting in the formation of a stable complex. GrpE releases ADP from DnaK; ATP binding to DnaK triggers the release of the substrate protein, thus completing the reaction cycle. Several rounds of ATP-dependent interactions between DnaJ, DnaK and GrpE are required for fully efficient folding. Also involved, together with DnaK and GrpE, in the DNA replication of plasmids through activation of initiation proteins. This chain is Chaperone protein DnaJ, found in Buchnera aphidicola subsp. Baizongia pistaciae (strain Bp).